The sequence spans 250 residues: MAFSASDVLVLIPARLAASRLPGKPLADVGGRPMIVEVARRAVAAGIGRVAVATDAVEIADAVRAAGFEAVMTRADHPSGSDRIFEALGVLDPDGAVQVVVNVQGDLPTIAPETIRAALVPLEEGPADIATLTAVITEEGERTDPNVVKVVGTPIGENRLRALYFTRATAPTGEGPLYHHIGLYAYRRAALERFVSLPPSPLEKRERLEQLRALEAGMRIDVAVVDAVPLGVDTPEHLERARALLASNDN.

Belongs to the KdsB family.

It is found in the cytoplasm. It carries out the reaction 3-deoxy-alpha-D-manno-oct-2-ulosonate + CTP = CMP-3-deoxy-beta-D-manno-octulosonate + diphosphate. Its pathway is nucleotide-sugar biosynthesis; CMP-3-deoxy-D-manno-octulosonate biosynthesis; CMP-3-deoxy-D-manno-octulosonate from 3-deoxy-D-manno-octulosonate and CTP: step 1/1. It participates in bacterial outer membrane biogenesis; lipopolysaccharide biosynthesis. Activates KDO (a required 8-carbon sugar) for incorporation into bacterial lipopolysaccharide in Gram-negative bacteria. The protein is 3-deoxy-manno-octulosonate cytidylyltransferase of Azorhizobium caulinodans (strain ATCC 43989 / DSM 5975 / JCM 20966 / LMG 6465 / NBRC 14845 / NCIMB 13405 / ORS 571).